A 728-amino-acid polypeptide reads, in one-letter code: Catalase-peroxidase 1 (728 aa).

A signal peptide spans 1–16 (MDKAQHTQGKCPVAHG). Positions 97–225 (WHSAGTYRMA…LAAVMMGLIY (129 aa)) form a cross-link, tryptophyl-tyrosyl-methioninium (Trp-Tyr) (with M-251). Catalysis depends on His98, which acts as the Proton acceptor. The tryptophyl-tyrosyl-methioninium (Tyr-Met) (with W-97) cross-link spans 225 to 251 (YVNPEGVDGQPDPLKTAQDIRVTFERM). His266 contacts heme b.

It belongs to the peroxidase family. Peroxidase/catalase subfamily. Homodimer or homotetramer. Requires heme b as cofactor. In terms of processing, formation of the three residue Trp-Tyr-Met cross-link is important for the catalase, but not the peroxidase activity of the enzyme.

It catalyses the reaction H2O2 + AH2 = A + 2 H2O. The catalysed reaction is 2 H2O2 = O2 + 2 H2O. Functionally, bifunctional enzyme with both catalase and broad-spectrum peroxidase activity. The polypeptide is Catalase-peroxidase 1 (Shewanella frigidimarina (strain NCIMB 400)).